The following is a 353-amino-acid chain: Photosystem II D2 protein (353 aa).

N-acetylthreonine is present on Thr2. Thr2 carries the post-translational modification Phosphothreonine. The helical transmembrane segment at 41–61 threads the bilayer; the sequence is CAYFALGGWFTGTTFVTSWYT. His118 contributes to the chlorophyll a binding site. Residues 125–141 form a helical membrane-spanning segment; the sequence is GFMLRQFELARSVQLRP. The pheophytin a site is built by Gln130 and Asn143. Residues 153-166 traverse the membrane as a helical segment; that stretch reads VFVSVFLIYPLGQS. A chlorophyll a-binding site is contributed by His198. The helical transmembrane segment at 208–228 threads the bilayer; that stretch reads AALLCAIHGATVENTLFEDGD. A plastoquinone is bound by residues His215 and Phe262. His215 is a Fe cation binding site. His269 is a Fe cation binding site. The chain crosses the membrane as a helical span at residues 279-295; it reads GLWMSALGVVGLALNLR.

This sequence belongs to the reaction center PufL/M/PsbA/D family. As to quaternary structure, PSII is composed of 1 copy each of membrane proteins PsbA, PsbB, PsbC, PsbD, PsbE, PsbF, PsbH, PsbI, PsbJ, PsbK, PsbL, PsbM, PsbT, PsbX, PsbY, PsbZ, Psb30/Ycf12, at least 3 peripheral proteins of the oxygen-evolving complex and a large number of cofactors. It forms dimeric complexes. The D1/D2 heterodimer binds P680, chlorophylls that are the primary electron donor of PSII, and subsequent electron acceptors. It shares a non-heme iron and each subunit binds pheophytin, quinone, additional chlorophylls, carotenoids and lipids. There is also a Cl(-1) ion associated with D1 and D2, which is required for oxygen evolution. The PSII complex binds additional chlorophylls, carotenoids and specific lipids. is required as a cofactor.

It is found in the plastid. Its subcellular location is the chloroplast thylakoid membrane. It catalyses the reaction 2 a plastoquinone + 4 hnu + 2 H2O = 2 a plastoquinol + O2. Its function is as follows. Photosystem II (PSII) is a light-driven water:plastoquinone oxidoreductase that uses light energy to abstract electrons from H(2)O, generating O(2) and a proton gradient subsequently used for ATP formation. It consists of a core antenna complex that captures photons, and an electron transfer chain that converts photonic excitation into a charge separation. The D1/D2 (PsbA/PsbD) reaction center heterodimer binds P680, the primary electron donor of PSII as well as several subsequent electron acceptors. D2 is needed for assembly of a stable PSII complex. The protein is Photosystem II D2 protein of Lemna minor (Common duckweed).